The following is a 490-amino-acid chain: C-type lectin domain family 14 member A (490 aa).

An N-terminal signal peptide occupies residues 1 to 21 (MRPAFALCLLWQALWPGPGGG). Residues 22 to 397 (EHPTADRAGC…TPQAFDSSSA (376 aa)) are Extracellular-facing. Residues 33–173 (ASGACYSLHH…LRANGYLCKY (141 aa)) enclose the C-type lectin domain. An intrachain disulfide couples cysteine 143 to cysteine 162. A glycan (N-linked (GlcNAc...) asparagine) is linked at asparagine 189. The EGF-like domain maps to 245–287 (PCPGRYLRAGKCAELPNCLDDLGGFACECATGFELGKDGRSCV). The interval 286 to 349 (CVTSGEGQPT…VTSIPEIPRW (64 aa)) is disordered. Over residues 301–315 (VPTRRPPATATSPVP) the composition is skewed to low complexity. An N-linked (GlcNAc...) asparagine glycan is attached at asparagine 381. The helical transmembrane segment at 398 to 418 (VVFIFVSTAVVVLVILTMTVL) threads the bilayer. Topologically, residues 419–490 (GLVKLCFHES…AESPLGSSDA (72 aa)) are cytoplasmic. The disordered stretch occupies residues 428 to 461 (SPSSQPRKESMGPPGLESDPEPAALGSSSAHCTN).

The protein localises to the membrane. The protein is C-type lectin domain family 14 member A (CLEC14A) of Homo sapiens (Human).